The chain runs to 401 residues: Adenosine 3'-phospho 5'-phosphosulfate transporter 2 (401 aa).

Residues Asn-12 and Asn-71 are each glycosylated (N-linked (GlcNAc...) asparagine). Transmembrane regions (helical) follow at residues 78–98, 114–134, 147–167, 170–190, 196–216, and 223–243; these read LTQFFICVAGVFVFYLIYGYL, YLTLVQFAFYSIFGLIELQLI, MIIAFLTVGTMGLSNTSLGYL, PTQVIFKCCKLIPVMLGGVFI, NVADVSAAICMSLGLIWFTLA, and NFNLTGVVLISLALCADAVIG. Asn-254 carries N-linked (GlcNAc...) asparagine glycosylation. The next 4 helical transmembrane spans lie at 267–287, 298–317, 324–346, and 349–369; these read IGFVYILLGLTCTSGLGPAVT, GYAFLFSLTGYFGISFVLAL, LIAVTVTTGRKAMTIVLSFIFFA, and FTFQYVWSGLLVVLGIFLNVY.

Belongs to the nucleotide-sugar transporter family. SLC35B subfamily. In terms of tissue distribution, preferentially and highly expressed in colon.

It is found in the golgi apparatus membrane. It carries out the reaction 3'-phosphoadenylyl sulfate(in) + adenosine 3',5'-bisphosphate(out) = 3'-phosphoadenylyl sulfate(out) + adenosine 3',5'-bisphosphate(in). Its function is as follows. Probably functions as a 3'-phosphoadenylyl sulfate:adenosine 3',5'-bisphosphate antiporter at the Golgi membranes. Mediates the transport from the cytosol into the lumen of the Golgi of 3'-phosphoadenylyl sulfate/adenosine 3'-phospho 5'-phosphosulfate (PAPS), a universal sulfuryl donor for sulfation events that take place in that compartment. In Homo sapiens (Human), this protein is Adenosine 3'-phospho 5'-phosphosulfate transporter 2.